The chain runs to 253 residues: MATFLTNVVSIKPTIFSFQSESFTPLHTRVNVFSSKPFPSLAGTFSRSSRTRFIPYAVTETEEKPAALDPSSEAARRVYIGNIPRTVTNEQLTKLVEEHGAVEKVQVMYDKYSGRSRRFGFATMKSVEDANAVVEKLNGNTVEGREIKVNITEKPIASSPDLSVLQSEDSAFVDSPYKVYVGNLAKTVTKEMLENLFSEKGKVVSAKVSRVPGTSKSTGFGFVTFSSEEDVEAAIVALNNSLLEGQKIRVNKA.

The transit peptide at 1–56 (MATFLTNVVSIKPTIFSFQSESFTPLHTRVNVFSSKPFPSLAGTFSRSSRTRFIPY) directs the protein to the chloroplast. RRM domains are found at residues 76–154 (RRVY…ITEK) and 177–253 (YKVY…VNKA).

It belongs to the chloroplast-specific ribosomal protein cS22 family. Component of the chloroplast small ribosomal subunit (SSU). Mature 70S chloroplast ribosomes of higher plants consist of a small (30S) and a large (50S) subunit. The 30S small subunit contains 1 molecule of ribosomal RNA (16S rRNA) and 24 different proteins. The 50S large subunit contains 3 rRNA molecules (23S, 5S and 4.5S rRNA) and 33 different proteins. Expressed constitutively in roots, stems, flower buds, flowers and leaves.

The protein resides in the plastid. It is found in the chloroplast. In terms of biological role, component of the chloroplast ribosome (chloro-ribosome), a dedicated translation machinery responsible for the synthesis of chloroplast genome-encoded proteins, including proteins of the transcription and translation machinery and components of the photosynthetic apparatus. May have a role in the recruitment of stored chloroplast mRNAs for active protein synthesis. Bind single strand DNA (ssDNA) and RNA in vitro. Exhibits RNA chaperone activity. Negatively regulates resistance responses to abiotic stresses during seed germination (e.g. salt, dehydration, and low temperature) and seedling growth (e.g. salt). The protein is Small ribosomal subunit protein cS22 of Arabidopsis thaliana (Mouse-ear cress).